The chain runs to 369 residues: Aminomethyltransferase (369 aa).

The protein belongs to the GcvT family. As to quaternary structure, the glycine cleavage system is composed of four proteins: P, T, L and H.

It carries out the reaction N(6)-[(R)-S(8)-aminomethyldihydrolipoyl]-L-lysyl-[protein] + (6S)-5,6,7,8-tetrahydrofolate = N(6)-[(R)-dihydrolipoyl]-L-lysyl-[protein] + (6R)-5,10-methylene-5,6,7,8-tetrahydrofolate + NH4(+). In terms of biological role, the glycine cleavage system catalyzes the degradation of glycine. The chain is Aminomethyltransferase from Xanthomonas axonopodis pv. citri (strain 306).